The chain runs to 328 residues: Neuronal membrane glycoprotein M6-b (328 aa).

The tract at residues 1-22 is disordered; the sequence is MKPAMETAAEENTEQSQERKVN. The helical transmembrane segment at 71 to 91 threads the bilayer; sequence GGVPYASLVATILCFSGVALF. Asn113 carries N-linked (GlcNAc...) asparagine glycosylation. Transmembrane regions (helical) follow at residues 130–150 and 176–196; these read VIYG…AEGF and FVFL…FSAV. Asn217 is a glycosylation site (N-linked (GlcNAc...) asparagine). The chain crosses the membrane as a helical span at residues 265–285; sequence FIVACAGAGATVIALIHFLMI. Phosphoserine occurs at positions 318, 320, and 326.

This sequence belongs to the myelin proteolipid protein family. In terms of assembly, interacts with SERT. As to expression, widely expressed. In the brain, expressed in neurons and oligodendrocytes.

The protein resides in the membrane. It localises to the cell membrane. Functionally, may be involved in neural development. Involved in regulation of osteoblast function and bone formation. Involved in matrix vesicle release by osteoblasts; this function seems to involve maintenance of the actin cytoskeleton. May be involved in cellular trafficking of SERT and thereby in regulation of serotonin uptake. The chain is Neuronal membrane glycoprotein M6-b (Gpm6b) from Mus musculus (Mouse).